The primary structure comprises 302 residues: MSSAAHLSPKPFGRLLTAMVTPFDSDGKVDYAIAGRLARYLVDEGSDGIVVCGTTGESPTLSWSEQHQLLETVKSSVGKAVKVLAGTGSNSTAEAIEATVKAAELGADGALVVVPYYNKPPQEGLEIHFRSIANAAPDLPLMLYNIPGRTGSSIHPATVKRLMNCPNIISYKAASGTTSEVTDLRMQCGSQLAVYSGDDGLLLPMMSVGAVGVVSVASHIVGSRIKAMIDAYSTGQVNIALAYHEQLQPLFRALFATTNPIPVKAALEAIGWQVGSPRRPLSPLKKQMKEDLIDIIKSLRQI.

Threonine 55 contributes to the pyruvate binding site. Residue tyrosine 144 is the Proton donor/acceptor of the active site. Residue lysine 172 is the Schiff-base intermediate with substrate of the active site. Residue valine 214 coordinates pyruvate.

The protein belongs to the DapA family. Homotetramer; dimer of dimers.

It is found in the cytoplasm. The enzyme catalyses L-aspartate 4-semialdehyde + pyruvate = (2S,4S)-4-hydroxy-2,3,4,5-tetrahydrodipicolinate + H2O + H(+). It functions in the pathway amino-acid biosynthesis; L-lysine biosynthesis via DAP pathway; (S)-tetrahydrodipicolinate from L-aspartate: step 3/4. Functionally, catalyzes the condensation of (S)-aspartate-beta-semialdehyde [(S)-ASA] and pyruvate to 4-hydroxy-tetrahydrodipicolinate (HTPA). The protein is 4-hydroxy-tetrahydrodipicolinate synthase of Prochlorococcus marinus (strain MIT 9211).